We begin with the raw amino-acid sequence, 135 residues long: MQNPSKAEIKEILQRSKRIAVVGLSDRPDRTSHMVSKAMQDAGYEIIPVNPTIDEALGVKAVSSLKEIDGPIDIVNVFRRSEQLPGVAEEFLETDAPVFWAQQGLVNEEAYQMLKEKGRTVIMDLCIKVAHAVTK.

This is an uncharacterized protein from Bacillus subtilis (strain 168).